The primary structure comprises 95 residues: Aspartyl/glutamyl-tRNA(Asn/Gln) amidotransferase subunit C (95 aa).

The protein belongs to the GatC family. Heterotrimer of A, B and C subunits.

The enzyme catalyses L-glutamyl-tRNA(Gln) + L-glutamine + ATP + H2O = L-glutaminyl-tRNA(Gln) + L-glutamate + ADP + phosphate + H(+). It catalyses the reaction L-aspartyl-tRNA(Asn) + L-glutamine + ATP + H2O = L-asparaginyl-tRNA(Asn) + L-glutamate + ADP + phosphate + 2 H(+). In terms of biological role, allows the formation of correctly charged Asn-tRNA(Asn) or Gln-tRNA(Gln) through the transamidation of misacylated Asp-tRNA(Asn) or Glu-tRNA(Gln) in organisms which lack either or both of asparaginyl-tRNA or glutaminyl-tRNA synthetases. The reaction takes place in the presence of glutamine and ATP through an activated phospho-Asp-tRNA(Asn) or phospho-Glu-tRNA(Gln). The polypeptide is Aspartyl/glutamyl-tRNA(Asn/Gln) amidotransferase subunit C (Shouchella clausii (strain KSM-K16) (Alkalihalobacillus clausii)).